The chain runs to 728 residues: Nucleolar GTP-binding protein 2 (728 aa).

At Met-1 the chain carries N-acetylmethionine. The tract at residues 1 to 33 is disordered; it reads MVKPKYKGRSTINRSAASTNPDRVQGAGGQNMR. Polar residues predominate over residues 10–22; it reads STINRSAASTNPD. The CP-type G domain maps to 207–368; sequence WGELYKVIDS…LIDCPGVVYP (162 aa). Residues 317-324 and 361-365 each bind GTP; these read GYPNVGKS and DCPGV. Disordered regions lie at residues 462–521, 538–595, and 636–728; these read PPNA…RNSE, VGPQ…DTKA, and YKEE…RQKQ. Residues 480–489 show a composition bias toward low complexity; the sequence is EVPTETTQNN. The segment covering 498 to 520 has biased composition (basic and acidic residues); that stretch reads EVERSDSITEKEPEGDCSQDRNS. The residue at position 504 (Ser-504) is a Phosphoserine. A compositionally biased stretch (acidic residues) spans 553–586; it reads SDLEDLESSGEEEEQEQEQPGEDAEEERSPDTQE. A compositionally biased stretch (basic residues) spans 718-728; the sequence is KHRRNKFRQKQ.

Belongs to the TRAFAC class YlqF/YawG GTPase family. NOG2 subfamily. As to quaternary structure, interacts with LYAR and RPL23A. Interacts with the nuclear importin-beta receptor and, at a lower extent, with importin-alpha.

The protein localises to the nucleus. It localises to the nucleolus. GTPase that associates with pre-60S ribosomal subunits in the nucleolus and is required for their nuclear export and maturation. May promote cell proliferation possibly by increasing p53/TP53 protein levels, and consequently those of its downstream product CDKN1A/p21, and decreasing RPL23A protein levels. This Mus musculus (Mouse) protein is Nucleolar GTP-binding protein 2 (Gnl2).